Consider the following 544-residue polypeptide: Zinc finger and BTB domain-containing protein 7B (544 aa).

One can recognise a BTB domain in the interval Cys-34–Ser-115. Ser-150 bears the Phosphoserine mark. 2 disordered regions span residues Thr-171–Asn-221 and Gly-244–Ile-314. Over residues Pro-186–Pro-200 the composition is skewed to pro residues. Residues Val-201–Lys-210 are compositionally biased toward basic residues. N6-acetyllysine; by EP300; alternate is present on residues Lys-210 and Lys-216. Glycyl lysine isopeptide (Lys-Gly) (interchain with G-Cter in ubiquitin); alternate cross-links involve residues Lys-210 and Lys-216. Acidic residues predominate over residues Phe-277 to Met-286. Lys-339 bears the N6-acetyllysine; by EP300; alternate mark. Lys-339 is covalently cross-linked (Glycyl lysine isopeptide (Lys-Gly) (interchain with G-Cter in ubiquitin); alternate). The segment at Met-348–Arg-404 is required for interaction with and acetylation by EP300. Residues Gln-350 to His-372 form a C2H2-type 1 zinc finger. Residue Thr-373 is modified to Phosphothreonine. C2H2-type zinc fingers lie at residues Phe-378 to His-400 and Tyr-406 to His-428. The C2H2-type 4; atypical zinc-finger motif lies at Tyr-434–Cys-458. Disordered regions lie at residues Arg-465–Asn-493 and Trp-507–Ser-544. Composition is skewed to low complexity over residues Ala-511–Pro-522 and Thr-531–Ser-544.

As to quaternary structure, homodimerizes. Interacts with NCL, NEDD4 and YBX1. Interacts with HNRNPU (via RNA-binding RGG-box region); the interaction facilitates the recruitment of long non-coding RNA Blnc1 by ZBTB7B. Interacts with HDAC4 and HDAC5; the interaction allows the recruitment of HDAC4 and HDAC5 on CD8 loci for deacetylation and possible inhibition of CD8 genes expression. Acetylated directly and specifically by EP300. EP300-mediated acetylation of Lys-210, Lys-216 and Lys-339 stabilizes the protein by antagonizing ubiquitin conjugation. Post-translationally, ubiquitinated, leading to proteasomal degradation. Competes with acetylation on Lys-210, Lys-216 and Lys-339. In terms of tissue distribution, widely expressed, with a higher level in skin. Expressed in thymus. Restricted to CD4 cells (mature single positive CD4(+) and intermediate CD4(+)CD8(+) cells). Expressed in the luminal epithelial cells in the mammary glands where is up-regulated at late pregnancy and lactation. Expression is enriched in brown fat.

The protein resides in the nucleus. In terms of biological role, transcription regulator that acts as a key regulator of lineage commitment of immature T-cell precursors. Exerts distinct biological functions in the mammary epithelial cells and T cells in a tissue-specific manner. Necessary and sufficient for commitment of CD4 lineage, while its absence causes CD8 commitment. Development of immature T-cell precursors (thymocytes) to either the CD4 helper or CD8 killer T-cell lineages correlates precisely with their T-cell receptor specificity for major histocompatibility complex class II or class I molecules, respectively. Cross-antagonism between ZBTB7B and CBF complexes are determinative to CD4 versus CD8 cell fate decision. Suppresses RUNX3 expression and imposes CD4+ lineage fate by inducing the SOCS suppressors of cytokine signaling. induces, as a transcriptional activator, SOCS genes expression which represses RUNX3 expression and promotes the CD4+ lineage fate. During CD4 lineage commitment, associates with multiple sites at the CD8 locus, acting as a negative regulator of the CD8 promoter and enhancers by epigenetic silencing through the recruitment of class II histone deacetylases, such as HDAC4 and HDAC5, to these loci. Regulates the development of IL17-producing CD1d-restricted naural killer (NK) T cells. Also functions as an important metabolic regulator in the lactating mammary glands. Critical feed-forward regulator of insulin signaling in mammary gland lactation, directly regulates expression of insulin receptor substrate-1 (IRS-1) and insulin-induced Akt-mTOR-SREBP signaling. Transcriptional repressor of the collagen COL1A1 and COL1A2 genes. May also function as a repressor of fibronectin and possibly other extracellular matrix genes. Potent driver of brown fat development, thermogenesis and cold-induced beige fat formation. Recruits the brown fat lncRNA 1 (Blnc1):HNRNPU ribonucleoprotein complex to activate thermogenic gene expression in brown and beige adipocytes. This is Zinc finger and BTB domain-containing protein 7B from Mus musculus (Mouse).